Here is a 141-residue protein sequence, read N- to C-terminus: Hemoglobin subunit alpha-D (141 aa).

In terms of domain architecture, Globin spans 1–141; sequence MLTADDKKLL…VAAVLAEKYR (141 aa). Heme b-binding residues include histidine 58 and histidine 87.

Belongs to the globin family. Heterotetramer of two alpha-D chains and two beta chains. Red blood cells.

Involved in oxygen transport from the lung to the various peripheral tissues. The protein is Hemoglobin subunit alpha-D (HBAD) of Chloephaga melanoptera (Andean goose).